We begin with the raw amino-acid sequence, 259 residues long: Protein IQ-DOMAIN 10 (259 aa).

The disordered stretch occupies residues 18–39 (KNKSNRGNVHSETSNRVKPVES). The 28-residue stretch at 50–77 (EVAVIRIQKAFRAFKARKRLCSLKSARR) folds into the IQ domain. The tract at residues 61 to 71 (RAFKARKRLCS) is calmodulin-binding. Residues 226-259 (KPSKKPEKSSPNNVITKTSAKPDEVGNSKKPGSG) are disordered.

The protein belongs to the IQD family. In terms of assembly, binds to multiple calmodulin (CaM) in the presence of Ca(2+) and CaM-like proteins.

Its subcellular location is the nucleus. The protein resides in the cytoplasm. It is found in the cytoskeleton. Its function is as follows. May be involved in cooperative interactions with calmodulins or calmodulin-like proteins. Recruits calmodulin proteins to microtubules, thus being a potential scaffold in cellular signaling and trafficking. May associate with nucleic acids and regulate gene expression at the transcriptional or post-transcriptional level. The polypeptide is Protein IQ-DOMAIN 10 (Arabidopsis thaliana (Mouse-ear cress)).